The following is a 136-amino-acid chain: Regulator of nucleoside diphosphate kinase (136 aa).

It belongs to the Rnk family. Interacts with the RNA polymerase.

In terms of biological role, may act as an anti-Gre factor. The sequence is that of Regulator of nucleoside diphosphate kinase from Escherichia coli O6:H1 (strain CFT073 / ATCC 700928 / UPEC).